We begin with the raw amino-acid sequence, 240 residues long: Ribonuclease HII (240 aa).

The region spanning 31-222 (RLIAGVDEAG…VRRALGLETA (192 aa)) is the RNase H type-2 domain. Positions 37, 38, and 130 each coordinate a divalent metal cation.

Belongs to the RNase HII family. Mn(2+) is required as a cofactor. Requires Mg(2+) as cofactor.

It localises to the cytoplasm. The catalysed reaction is Endonucleolytic cleavage to 5'-phosphomonoester.. Functionally, endonuclease that specifically degrades the RNA of RNA-DNA hybrids. The chain is Ribonuclease HII from Xanthomonas campestris pv. campestris (strain 8004).